Consider the following 321-residue polypeptide: Cathepsin O (321 aa).

The N-terminal stretch at 1-23 (MDVRALPWLPWLLWLLCRGGGDA) is a signal peptide. The propeptide at 24 to 107 (DSRAPFTPTW…EVHMSIPNVS (84 aa)) is activation peptide. N-linked (GlcNAc...) asparagine glycans are attached at residues Asn-62 and Asn-105. Intrachain disulfides connect Cys-129–Cys-170, Cys-163–Cys-204, and Cys-262–Cys-310. Cys-132 is an active-site residue. Residues His-269 and Asn-289 contribute to the active site.

It belongs to the peptidase C1 family. In terms of tissue distribution, expressed in all tissues examined. High levels seen in the ovary, kidney and placenta while low levels seen in thymus and skeletal muscle.

It localises to the lysosome. It catalyses the reaction The recombinant human enzyme hydrolyzes synthetic endopeptidase substrates including Z-Phe-Arg-NHMec and Z-Arg-Arg-NHMec.. Functionally, proteolytic enzyme possibly involved in normal cellular protein degradation and turnover. This Homo sapiens (Human) protein is Cathepsin O (CTSO).